The following is a 305-amino-acid chain: UDP-3-O-acyl-N-acetylglucosamine deacetylase (305 aa).

Histidine 78, histidine 235, and aspartate 239 together coordinate Zn(2+). Catalysis depends on histidine 262, which acts as the Proton donor.

The protein belongs to the LpxC family. Zn(2+) is required as a cofactor.

It catalyses the reaction a UDP-3-O-[(3R)-3-hydroxyacyl]-N-acetyl-alpha-D-glucosamine + H2O = a UDP-3-O-[(3R)-3-hydroxyacyl]-alpha-D-glucosamine + acetate. It participates in glycolipid biosynthesis; lipid IV(A) biosynthesis; lipid IV(A) from (3R)-3-hydroxytetradecanoyl-[acyl-carrier-protein] and UDP-N-acetyl-alpha-D-glucosamine: step 2/6. In terms of biological role, catalyzes the hydrolysis of UDP-3-O-myristoyl-N-acetylglucosamine to form UDP-3-O-myristoylglucosamine and acetate, the committed step in lipid A biosynthesis. The protein is UDP-3-O-acyl-N-acetylglucosamine deacetylase of Citrifermentans bemidjiense (strain ATCC BAA-1014 / DSM 16622 / JCM 12645 / Bem) (Geobacter bemidjiensis).